A 211-amino-acid chain; its full sequence is Redox-sensing transcriptional repressor Rex (211 aa).

Positions 18–57 (LYYRFIESLHAAGKQRVSSTELSQAVKVDSATIRRDFSYF) form a DNA-binding region, H-T-H motif. Residue 92–97 (GVGNLG) coordinates NAD(+).

Belongs to the transcriptional regulatory Rex family. As to quaternary structure, homodimer.

It localises to the cytoplasm. In terms of biological role, modulates transcription in response to changes in cellular NADH/NAD(+) redox state. This is Redox-sensing transcriptional repressor Rex from Shouchella clausii (strain KSM-K16) (Alkalihalobacillus clausii).